A 611-amino-acid polypeptide reads, in one-letter code: E-selectin (611 aa).

The N-terminal stretch at 1-22 (MITSQLLPALTLVLLLFKEGGA) is a signal peptide. Positions 23-140 (WSYNASTEAM…CDKKKLALCY (118 aa)) constitute a C-type lectin domain. The Extracellular segment spans residues 23–557 (WSYNASTEAM…CEAPTESSIP (535 aa)). Residue asparagine 26 is glycosylated (N-linked (GlcNAc...) asparagine). 19 disulfides stabilise this stretch: cysteine 41/cysteine 139, cysteine 112/cysteine 131, cysteine 144/cysteine 155, cysteine 149/cysteine 164, cysteine 166/cysteine 175, cysteine 181/cysteine 225, cysteine 194/cysteine 207, cysteine 211/cysteine 238, cysteine 243/cysteine 287, cysteine 256/cysteine 269, cysteine 273/cysteine 300, cysteine 305/cysteine 350, cysteine 336/cysteine 363, cysteine 368/cysteine 413, cysteine 399/cysteine 426, cysteine 431/cysteine 476, cysteine 462/cysteine 489, cysteine 494/cysteine 535, and cysteine 521/cysteine 548. The Ca(2+) site is built by glutamate 102, asparagine 104, and glutamate 110. Residues 102–110 (EPNNKQNDE), 114–119 (EIYIKR), and 127–129 (NDE) each bind a carbohydrate. Asparagine 127 and aspartate 128 together coordinate Ca(2+). An EGF-like domain is found at 141–176 (TAACTPTSCSGHGECVETVNNYTCKCHPGFRGLRCE). Asparagine 161 is a glycosylation site (N-linked (GlcNAc...) asparagine). Sushi domains follow at residues 179-240 (VTCQ…ACNV) and 241-302 (VECS…TCKA). Asparagine 204 carries N-linked (GlcNAc...) asparagine glycosylation. N-linked (GlcNAc...) asparagine glycosylation is present at asparagine 266. Asparagine 313 and asparagine 333 each carry an N-linked (GlcNAc...) asparagine glycan. 4 consecutive Sushi domains span residues 316-365 (VSCS…VCKA), 367-428 (QCKA…TCEA), 430-491 (KCDA…SCQV), and 492-550 (VQCF…TCEA). N-linked (GlcNAc...) asparagine glycosylation is present at asparagine 528. Residues 558–579 (LAVGLTAGGTSLLTVASFLLWL) form a helical membrane-spanning segment. The Cytoplasmic portion of the chain corresponds to 580 to 611 (LKRLRKRAKKFVPASSCQSLQSDGSYHMPCSI).

It belongs to the selectin/LECAM family. As to quaternary structure, interacts with SELPLG/PSGL1 and PODXL2 through the sialyl Lewis X epitope. SELPLG sulfation appears not to be required for this interaction.

It localises to the cell membrane. In terms of biological role, cell-surface glycoprotein having a role in immunoadhesion. Mediates in the adhesion of blood neutrophils in cytokine-activated endothelium through interaction with SELPLG/PSGL1. May have a role in capillary morphogenesis. The protein is E-selectin (SELE) of Canis lupus familiaris (Dog).